The sequence spans 508 residues: Cobalamin biosynthesis protein CobIJ (508 aa).

Residues 1 to 243 (MSARGTLWGV…AMLPGGRRRA (243 aa)) are precorrin-2 C20-methyltransferase. The interval 244-508 (LLTGTVAVVG…TATKSSRHSD (265 aa)) is precorrin-3 methylase. The disordered stretch occupies residues 489-508 (PRRYPEAGRATATKSSRHSD).

It belongs to the precorrin methyltransferase family.

The catalysed reaction is precorrin-2 + S-adenosyl-L-methionine = precorrin-3A + S-adenosyl-L-homocysteine + H(+). It catalyses the reaction precorrin-3B + S-adenosyl-L-methionine = precorrin-4 + S-adenosyl-L-homocysteine + 3 H(+). The protein operates within cofactor biosynthesis; adenosylcobalamin biosynthesis; cob(II)yrinate a,c-diamide from precorrin-2 (aerobic route): step 1/10. It functions in the pathway cofactor biosynthesis; adenosylcobalamin biosynthesis; cob(II)yrinate a,c-diamide from precorrin-2 (aerobic route): step 3/10. Functionally, methylates precorrin-2 at the C-20 position to produce precorrin-3A. This chain is Cobalamin biosynthesis protein CobIJ (cobIJ), found in Mycobacterium bovis (strain ATCC BAA-935 / AF2122/97).